The primary structure comprises 212 residues: 3-oxo-tetronate 4-phosphate decarboxylase (212 aa).

E79 functions as the Proton acceptor in the catalytic mechanism. Zn(2+)-binding residues include E79, H98, and H100. Catalysis depends on Y125, which acts as the Proton donor. Zn(2+) is bound at residue H165.

Belongs to the aldolase class II family. AraD/FucA subfamily. Requires Zn(2+) as cofactor.

The enzyme catalyses 3-dehydro-4-O-phospho-D-erythronate + H(+) = dihydroxyacetone phosphate + CO2. The catalysed reaction is 3-dehydro-4-O-phospho-L-erythronate + H(+) = dihydroxyacetone phosphate + CO2. Catalyzes the decarboxylation of 3-oxo-tetronate 4-phosphate to dihydroxyacetone phosphate (DHAP) and CO(2). This is 3-oxo-tetronate 4-phosphate decarboxylase from Escherichia coli O6:H1 (strain CFT073 / ATCC 700928 / UPEC).